Consider the following 177-residue polypeptide: Translation initiation factor IF-3 (177 aa).

It belongs to the IF-3 family. As to quaternary structure, monomer.

Its subcellular location is the cytoplasm. Its function is as follows. IF-3 binds to the 30S ribosomal subunit and shifts the equilibrium between 70S ribosomes and their 50S and 30S subunits in favor of the free subunits, thus enhancing the availability of 30S subunits on which protein synthesis initiation begins. The polypeptide is Translation initiation factor IF-3 (Nostoc sp. (strain PCC 7120 / SAG 25.82 / UTEX 2576)).